Reading from the N-terminus, the 397-residue chain is Acetate kinase (397 aa).

Asn8 is a binding site for Mg(2+). Lys15 serves as a coordination point for ATP. Arg89 contributes to the substrate binding site. The Proton donor/acceptor role is filled by Asp146. ATP is bound by residues 206–210 (HLGNG), 281–283 (DLR), and 329–333 (GVGEN). Residue Glu382 participates in Mg(2+) binding.

The protein belongs to the acetokinase family. As to quaternary structure, homodimer. It depends on Mg(2+) as a cofactor. Mn(2+) serves as cofactor.

It localises to the cytoplasm. The enzyme catalyses acetate + ATP = acetyl phosphate + ADP. It participates in metabolic intermediate biosynthesis; acetyl-CoA biosynthesis; acetyl-CoA from acetate: step 1/2. Catalyzes the formation of acetyl phosphate from acetate and ATP. Can also catalyze the reverse reaction. This is Acetate kinase from Bacillus thuringiensis subsp. konkukian (strain 97-27).